The following is a 350-amino-acid chain: Adenine deaminase (350 aa).

Positions 24, 26, and 207 each coordinate Zn(2+). E210 functions as the Proton donor in the catalytic mechanism. Residue D288 coordinates Zn(2+). D289 is a substrate binding site.

The protein belongs to the metallo-dependent hydrolases superfamily. Adenosine and AMP deaminases family. Adenine deaminase type 2 subfamily. Requires Zn(2+) as cofactor.

The enzyme catalyses adenine + H2O + H(+) = hypoxanthine + NH4(+). In terms of biological role, catalyzes the hydrolytic deamination of adenine to hypoxanthine. Plays an important role in the purine salvage pathway and in nitrogen catabolism. This chain is Adenine deaminase, found in Paraburkholderia phytofirmans (strain DSM 17436 / LMG 22146 / PsJN) (Burkholderia phytofirmans).